The following is a 1064-amino-acid chain: Bifunctional cytochrome P450/NADPH--P450 reductase ascE (1064 aa).

The segment at 1 to 484 (MTELIPGPKG…LHGGAKKGSK (484 aa)) is cytochrome P450. Cysteine 411 contributes to the heme binding site. The tract at residues 485–1064 (IDGPSSGASL…ANRYVTEIFA (580 aa)) is NADPH-P-450 reductase. Residues 504–644 (MTILYGSDSG…DFERWQDDQL (141 aa)) enclose the Flavodoxin-like domain. FMN is bound by residues 510-514 (SDSGT) and 588-620 (VYGC…KRIA). The FAD-binding FR-type domain maps to 676–905 (VDADEATVQS…KPALRLFHPP (230 aa)).

It in the N-terminal section; belongs to the cytochrome P450 family. It depends on FAD as a cofactor. FMN is required as a cofactor. The cofactor is heme.

The catalysed reaction is ilicicolin A + NADPH + O2 + H(+) = ilicicolin A epoxide + NADP(+) + H2O. The protein operates within secondary metabolite biosynthesis; terpenoid biosynthesis. Its function is as follows. Bifunctional cytochrome P450/NADPH--P450 reductase; part of the asc-1 gene cluster that mediates the biosynthesis both ascochlorin and ascofuranone, a strong inhibitor of cyanide-insensitive alternative oxidases and a promising drug candidate against African trypanosomiasis. The first step in the pathway is performed by the non-reducing polyketide synthase ascC that produces orsellinic acid by condensing acetyl-CoA with 3 malonyl-CoA units. Orsellinic acid is then prenylated by the prenyltransferase ascA to yield ilicicolinic acid B. Ilicicolinic acid B is further reduced to ilicicolin B by the reductase ascB. The halogenase ascD then chlorinates ilicicolin B to produce ilicicolin A which is converted to ilicicolin A epoxide by the cytochrome P450 monooxygenase ascE that catalyzes stereoselective epoxidation of the terminal double bond of the prenyl group. Ilicicolin A epoxide is the last common precursor for the biosynthesis of ascofuranone and ascochlorin. The terpene cyclase ascF produces a monocyclic terpene, and the cyclization reaction is proposed to be initiated by protonation of the terminal epoxide of ilicicolin A epoxide to generate a monocyclic tertiarycation, which is followed by a series of hydride and methyl shifts with abstraction of proton, leading to the formation of the (14S,15R,19R)-trimethylcyclohexanone ring structure of ilicicolin C, which is finally reduced to ascochlorin by the dehydrogenase ascG. On the other hand, ilicicolin A epoxide is hydroxylated by the cytochrome P450 monooxygenase ascH, and the resultant product is cyclized by the terpene cyclase ascI to ascofuranol via protonation-initiated epoxide ring opening, which facilitates the 6-endo-tet cyclization to form the tetrahy-drofuran ring. Finally, ascofuranol is oxidized into ascofuranone by ascJ. The sequence is that of Bifunctional cytochrome P450/NADPH--P450 reductase ascE from Acremonium egyptiacum (Oospora egyptiaca).